A 111-amino-acid chain; its full sequence is Large ribosomal subunit protein uL22 (111 aa).

This sequence belongs to the universal ribosomal protein uL22 family. In terms of assembly, part of the 50S ribosomal subunit.

Its function is as follows. This protein binds specifically to 23S rRNA; its binding is stimulated by other ribosomal proteins, e.g. L4, L17, and L20. It is important during the early stages of 50S assembly. It makes multiple contacts with different domains of the 23S rRNA in the assembled 50S subunit and ribosome. In terms of biological role, the globular domain of the protein is located near the polypeptide exit tunnel on the outside of the subunit, while an extended beta-hairpin is found that lines the wall of the exit tunnel in the center of the 70S ribosome. The polypeptide is Large ribosomal subunit protein uL22 (Stenotrophomonas maltophilia (strain R551-3)).